The sequence spans 1342 residues: DNA-directed RNA polymerase subunit beta (1342 aa).

This sequence belongs to the RNA polymerase beta chain family. As to quaternary structure, the RNAP catalytic core consists of 2 alpha, 1 beta, 1 beta' and 1 omega subunit. When a sigma factor is associated with the core the holoenzyme is formed, which can initiate transcription.

The enzyme catalyses RNA(n) + a ribonucleoside 5'-triphosphate = RNA(n+1) + diphosphate. DNA-dependent RNA polymerase catalyzes the transcription of DNA into RNA using the four ribonucleoside triphosphates as substrates. This is DNA-directed RNA polymerase subunit beta from Yersinia enterocolitica serotype O:8 / biotype 1B (strain NCTC 13174 / 8081).